A 672-amino-acid chain; its full sequence is Glycine--tRNA ligase beta subunit (672 aa).

It belongs to the class-II aminoacyl-tRNA synthetase family. In terms of assembly, tetramer of two alpha and two beta subunits.

It localises to the cytoplasm. The enzyme catalyses tRNA(Gly) + glycine + ATP = glycyl-tRNA(Gly) + AMP + diphosphate. The polypeptide is Glycine--tRNA ligase beta subunit (Thermotoga sp. (strain RQ2)).